The following is a 339-amino-acid chain: MLEERRLEVLRAIVEDFVLSNEPVGSKTLAERHALGVSPATVRNDMSALEEEGYITQPHTSAGRIPTDKGYRLFVDRLSGVKPLSRAERRAIQSFLEGAVDLDDVVRRSVRLLAQLTRQVAVVQYPSLSSSSVRHIEIVTLNPNRLLLVLITDTGRVEQRVVDIPTPVDDGVVGELRGLLNGSLRGRRVVDATEVAADLPETVRPDLRPHLTTLTTVVLEALLERQEERVALAGTANLTRSSVDFADSLRFILEALEEQVVLLKLIGSARETGTVTVRIGRETDVDALRSTSVIATGYGLGPAVLGGMGVVGPMRMDYPGTMAAVRAVAKYVGELLGAD.

Belongs to the HrcA family.

In terms of biological role, negative regulator of class I heat shock genes (grpE-dnaK-dnaJ and groELS operons). Prevents heat-shock induction of these operons. The polypeptide is Heat-inducible transcription repressor HrcA (Parafrankia sp. (strain EAN1pec)).